The sequence spans 444 residues: COP9 signalosome complex subunit 2 (444 aa).

Residues 1 to 31 form a disordered region; it reads MSDNDDDFMCDDDEDYGLEYSEDSNSEPDVD. The 163-residue stretch at 255 to 417 folds into the PCI domain; the sequence is AHTDFFEAFK…QVLQLDKINS (163 aa).

Belongs to the CSN2 family. As to quaternary structure, component of the CSN complex, probably composed of CSN1b, alien/CSN2, CSN3, CSN4, CSN5, CSN6, CSN7 and CSN8. Interacts with Rpn6. Expressed during embryonic stages 11-14 in the muscle attachment sites (apodemes); pharynx attachment to the roof of the mouth and in the epidermis of the head for the dorsal and ventral prothoracic pharyngeal muscle attachment. From stage 16 onwards expression is seen in all thoracic and abdominal apodemes.

It is found in the cytoplasm. The protein resides in the nucleus. In terms of biological role, component of the COP9 signalosome complex (CSN), a complex involved in various cellular and developmental processes. The CSN complex is an essential regulator of the ubiquitin (Ubl) conjugation pathway by mediating the deneddylation of the cullin subunits of the SCF-type E3 ligase complexes, leading to decrease the Ubl ligase activity of SCF. The CSN complex plays an essential role in oogenesis and embryogenesis and is required for proper photoreceptor R cell differentiation and promote lamina glial cell migration or axon targeting. It also promotes Ubl-dependent degradation of cyclin E (CycE) during early oogenesis. This is COP9 signalosome complex subunit 2 from Drosophila melanogaster (Fruit fly).